A 186-amino-acid chain; its full sequence is Elongation factor P (186 aa).

This sequence belongs to the elongation factor P family.

Its subcellular location is the cytoplasm. Its pathway is protein biosynthesis; polypeptide chain elongation. Functionally, involved in peptide bond synthesis. Stimulates efficient translation and peptide-bond synthesis on native or reconstituted 70S ribosomes in vitro. Probably functions indirectly by altering the affinity of the ribosome for aminoacyl-tRNA, thus increasing their reactivity as acceptors for peptidyl transferase. This Crocosphaera subtropica (strain ATCC 51142 / BH68) (Cyanothece sp. (strain ATCC 51142)) protein is Elongation factor P.